The following is a 294-amino-acid chain: GTPase Era (294 aa).

The Era-type G domain occupies 3 to 170 (KSGFISIIGR…LELMIKYMPE (168 aa)). A G1 region spans residues 11 to 18 (GRPNVGKS). Position 11-18 (11-18 (GRPNVGKS)) interacts with GTP. The tract at residues 37-41 (QTTRN) is G2. A G3 region spans residues 58–61 (DTPG). GTP contacts are provided by residues 58–62 (DTPGI) and 120–123 (NKID). Residues 120-123 (NKID) are G4. Residues 149-151 (ISA) form a G5 region. The KH type-2 domain maps to 201–278 (LSEEVPHGIA…NLKVWVKVKK (78 aa)).

The protein belongs to the TRAFAC class TrmE-Era-EngA-EngB-Septin-like GTPase superfamily. Era GTPase family. Monomer.

It localises to the cytoplasm. The protein localises to the cell membrane. Functionally, an essential GTPase that binds both GDP and GTP, with rapid nucleotide exchange. Plays a role in 16S rRNA processing and 30S ribosomal subunit biogenesis and possibly also in cell cycle regulation and energy metabolism. This Clostridium novyi (strain NT) protein is GTPase Era.